The primary structure comprises 344 residues: MAETDGAAAFTELRDPDWDESQLRQYTFPTRQIPRLSHTDPRAEVLINNEEPVVLTDTSLVYPALKWDIPYLQENIGNGDFSVYIAENHKFLYYDEKKMVNFQDFVPKSRRIEMKFSEFVDKMHQTEEQGGKGRVYLQQTLNDTVGRKIVVDFLGFNWNWINKQQAKRNWGPLTSNLLLIGMEGNVTPAHYDEQQNFFAQIKGHKRCILFPPDQFDCLYPYPVHHPCDRQSQVDFENPDYDKFPNFKNAVGYEAVVGPGDVLYIPMYWWHHIESLLNGGETITVNFWYKGAPTPKRIEYPLKAHQKVAIMRNIEKMLGEALGDPHEVGPLLNMMIKGRYDHGLS.

N-acetylalanine is present on Ala-2. A JmjC domain is found at 133-303 (GRVYLQQTLN…PKRIEYPLKA (171 aa)). Tyr-136 contributes to the 2-oxoglutarate binding site. Residues Asp-143 and 173-174 (LT) each bind substrate. 2-oxoglutarate is bound at residue Thr-187. Fe cation is bound by residues His-190 and Asp-192. Residue 192–194 (DEQ) participates in substrate binding. Residues Asn-196 and Lys-205 each coordinate 2-oxoglutarate. 229–230 (RQ) contacts substrate. His-270 lines the Fe cation pocket. Asn-285 contributes to the 2-oxoglutarate binding site. Ala-291 and Asn-312 together coordinate substrate.

Homodimer; homodimerization is essential for catalytic activity. It depends on Fe(2+) as a cofactor.

It localises to the nucleus. The protein localises to the cytoplasm. It is found in the perinuclear region. It catalyses the reaction L-asparaginyl-[hypoxia-inducible factor alpha subunit] + 2-oxoglutarate + O2 = (3S)-3-hydroxy-L-asparaginyl-[hypoxia-inducible factor alpha subunit] + succinate + CO2. The enzyme catalyses L-histidyl-[ankyrin-repeat domain protein] + 2-oxoglutarate + O2 = (3S)-3-hydroxy-L-histidyl-[ankyrin-repeat domain protein] + succinate + CO2. The catalysed reaction is L-asparaginyl-[ankyrin-repeat domain protein] + 2-oxoglutarate + O2 = (3S)-3-hydroxy-L-asparaginyl-[ankyrin-repeat domain protein] + succinate + CO2. It carries out the reaction L-aspartyl-[ankyrin-repeat domain protein] + 2-oxoglutarate + O2 = (3S)-3-hydroxy-L-aspartyl-[ankyrin-repeat domain protein] + succinate + CO2. In terms of biological role, hydroxylates a specific Asn residue in the C-terminal transactivation domain (CAD) of HIF-1 alpha. The hydroxylation prevents interaction of HIF-1 with transcriptional coactivators. Also hydroxylates specific Asn, Asp and His residues within ankyrin repeat domain-containing proteins. This chain is Hypoxia-inducible factor 1-alpha inhibitor (hif1an), found in Danio rerio (Zebrafish).